The primary structure comprises 112 residues: Cortistatin (112 aa).

The first 27 residues, methionine 1–alanine 27, serve as a signal peptide directing secretion. The propeptide occupies serine 28–serine 81. The disordered stretch occupies residues glutamine 66–lysine 101. The cysteines at positions 100 and 111 are disulfide-linked.

Belongs to the somatostatin family. Interneurons in the cerebral cortex and hippocampus.

The protein resides in the secreted. Neuropeptide with neuronal depressant and sleep-modulating properties. The polypeptide is Cortistatin (Cort) (Rattus norvegicus (Rat)).